Reading from the N-terminus, the 365-residue chain is Chorismate synthase (365 aa).

NADP(+)-binding residues include Arg-48 and Arg-54. Residues 131–133 (RSS), 243–244 (NA), Gly-288, 303–307 (KPTSS), and Arg-329 each bind FMN.

This sequence belongs to the chorismate synthase family. In terms of assembly, homotetramer. Requires FMNH2 as cofactor.

It carries out the reaction 5-O-(1-carboxyvinyl)-3-phosphoshikimate = chorismate + phosphate. Its pathway is metabolic intermediate biosynthesis; chorismate biosynthesis; chorismate from D-erythrose 4-phosphate and phosphoenolpyruvate: step 7/7. Its function is as follows. Catalyzes the anti-1,4-elimination of the C-3 phosphate and the C-6 proR hydrogen from 5-enolpyruvylshikimate-3-phosphate (EPSP) to yield chorismate, which is the branch point compound that serves as the starting substrate for the three terminal pathways of aromatic amino acid biosynthesis. This reaction introduces a second double bond into the aromatic ring system. The protein is Chorismate synthase of Sinorhizobium medicae (strain WSM419) (Ensifer medicae).